A 406-amino-acid polypeptide reads, in one-letter code: Tyrosine--tRNA ligase (406 aa).

An L-tyrosine-binding site is contributed by Y35. Residues 40 to 49 carry the 'HIGH' region motif; that stretch reads PTADSLHVGH. L-tyrosine is bound by residues Y168 and Q172. Positions 228–232 match the 'KMSKS' region motif; that stretch reads KMGKT. K231 is a binding site for ATP. Residues 340-404 enclose the S4 RNA-binding domain; it reads AELLDILVEA…RGKKNYNKIV (65 aa).

This sequence belongs to the class-I aminoacyl-tRNA synthetase family. TyrS type 1 subfamily. As to quaternary structure, homodimer.

It is found in the cytoplasm. The catalysed reaction is tRNA(Tyr) + L-tyrosine + ATP = L-tyrosyl-tRNA(Tyr) + AMP + diphosphate + H(+). Functionally, catalyzes the attachment of tyrosine to tRNA(Tyr) in a two-step reaction: tyrosine is first activated by ATP to form Tyr-AMP and then transferred to the acceptor end of tRNA(Tyr). The protein is Tyrosine--tRNA ligase of Clostridium perfringens (strain 13 / Type A).